Consider the following 184-residue polypeptide: ADP-ribosylation factor-like protein 8c (184 aa).

The note=Mediates targeting to membranes intramembrane region spans 1–18; the sequence is MGLWDSLLNWLRSLFFKQ. GTP is bound by residues 29–34, 48–51, 70–74, and 129–132; these read NAGKTS, MIPT, DLGGQ, and NKID.

The protein belongs to the small GTPase superfamily. Arf family. Interacts with tubulin.

It localises to the late endosome membrane. The protein resides in the lysosome membrane. It is found in the cytoplasm. The protein localises to the cytoskeleton. Its subcellular location is the spindle. Functionally, may play a role in lysosome motility. May play a role in chromosome segregation. In terms of biological role, (Microbial infection) Component of tomato mosaic virus (ToMV) RNA replication complexes. Required for tobamovirus multiplication, especially for efficient negative-strand RNA synthesis and viral RNA capping. The protein is ADP-ribosylation factor-like protein 8c of Arabidopsis thaliana (Mouse-ear cress).